The following is a 346-amino-acid chain: Secreted frizzled-related protein 4 (346 aa).

A signal peptide spans 1–18 (MFLSILVALCLWLHLALG). Positions 19–139 (VRGAPCEAVR…VYDRGVCISP (121 aa)) constitute an FZ domain. 5 cysteine pairs are disulfide-bonded: C24–C85, C32–C78, C69–C108, C97–C136, and C101–C125. Residues N38 and N68 are each glycosylated (N-linked (GlcNAc...) asparagine). N-linked (GlcNAc...) asparagine glycans are attached at residues N116, N194, and N240. The NTR domain maps to 178-307 (CKCKKVKPTL…IQDKKKTAGR (130 aa)). The segment covering 294 to 303 (QRRTIQDKKK) has biased composition (basic and acidic residues). Residues 294 to 346 (QRRTIQDKKKTAGRTSRSNPPKPKGKPPAPKPASPKKNIKTRSAQKKTNPKKV) are disordered. Positions 313–326 (PPKPKGKPPAPKPA) are enriched in pro residues. A compositionally biased stretch (basic residues) spans 330–346 (KNIKTRSAQKKTNPKKV).

It belongs to the secreted frizzled-related protein (sFRP) family.

It localises to the secreted. Soluble frizzled-related proteins (sFRPS) function as modulators of Wnt signaling through direct interaction with Wnts. They have a role in regulating cell growth and differentiation in specific cell types. SFRP4 plays a role in bone morphogenesis. May also act as a regulator of adult uterine morphology and function. May also increase apoptosis during ovulation possibly through modulation of FZ1/FZ4/WNT4 signaling. Has phosphaturic effects by specifically inhibiting sodium-dependent phosphate uptake. The polypeptide is Secreted frizzled-related protein 4 (SFRP4) (Macaca mulatta (Rhesus macaque)).